We begin with the raw amino-acid sequence, 247 residues long: Carboxy-S-adenosyl-L-methionine synthase (247 aa).

Residues Y40, 65-67 (GAS), 90-91 (DN), 122-123 (DI), N137, and R204 contribute to the S-adenosyl-L-methionine site.

It belongs to the class I-like SAM-binding methyltransferase superfamily. Cx-SAM synthase family. Homodimer.

It catalyses the reaction prephenate + S-adenosyl-L-methionine = carboxy-S-adenosyl-L-methionine + 3-phenylpyruvate + H2O. Its function is as follows. Catalyzes the conversion of S-adenosyl-L-methionine (SAM) to carboxy-S-adenosyl-L-methionine (Cx-SAM). In Pseudomonas entomophila (strain L48), this protein is Carboxy-S-adenosyl-L-methionine synthase.